The following is a 43-amino-acid chain: uncharacterized protein (43 aa).

The helical transmembrane segment at 21–41 (SSFALIVVLFILLIIVGAAIF) threads the bilayer.

Belongs to the SscA family.

Its subcellular location is the membrane. This is an uncharacterized protein from Bacillus subtilis (strain 168).